The primary structure comprises 407 residues: MKSILWHNLKLCAHGDPNDTIADAAIAVNGDGTIAWTGRASDVPAGYVHWPREDLRGAWVTPGLVDCHTHLVYGGQRADEFAQRLAGASYEEIAQRGGGIVSTVRATRDASEAALFEQACARLRPLLAEGVTAIEIKSGYGLELASERRMLRVARQLGERFPVSVYTTFLGAHALPPEYAGRADEYIDEVCERMLPALADEGLVDAVDVFCERIGFTLAQSERVFEAAARRGLPVKMHAEQLSNGGGSALAARYRALSADHLEYLDAAGVAAMRASGTTAVLLPGAYYFIRETKLPPIDLLRRHGVPIALATDHNPGTSPLTSLLLTMNMGCTVFKLTVQEALLGVTRHAAAALGASDRHGSLAPGRQADFAVWPVSTLAELAYWFGRPLCERVVKGGVTVFTRDAR.

The Fe(3+) site is built by histidine 68 and histidine 70. Positions 68 and 70 each coordinate Zn(2+). Arginine 77, tyrosine 140, and histidine 173 together coordinate 4-imidazolone-5-propanoate. Residue tyrosine 140 participates in N-formimidoyl-L-glutamate binding. A Fe(3+)-binding site is contributed by histidine 238. Histidine 238 provides a ligand contact to Zn(2+). Position 241 (glutamine 241) interacts with 4-imidazolone-5-propanoate. Fe(3+) is bound at residue aspartate 313. Aspartate 313 contacts Zn(2+). Residues asparagine 315 and glycine 317 each coordinate N-formimidoyl-L-glutamate. Threonine 318 serves as a coordination point for 4-imidazolone-5-propanoate.

The protein belongs to the metallo-dependent hydrolases superfamily. HutI family. It depends on Zn(2+) as a cofactor. Fe(3+) is required as a cofactor.

It localises to the cytoplasm. The catalysed reaction is 4-imidazolone-5-propanoate + H2O = N-formimidoyl-L-glutamate. The protein operates within amino-acid degradation; L-histidine degradation into L-glutamate; N-formimidoyl-L-glutamate from L-histidine: step 3/3. In terms of biological role, catalyzes the hydrolytic cleavage of the carbon-nitrogen bond in imidazolone-5-propanoate to yield N-formimidoyl-L-glutamate. It is the third step in the universal histidine degradation pathway. The chain is Imidazolonepropionase from Burkholderia pseudomallei (strain 1710b).